A 355-amino-acid chain; its full sequence is MRGKLLSFSLFGESHGKAVGVLVEGLPPGIEVSVEELKRELERRKGIERFATKRKETDEPKILSGVFRGRTTGTPVAVIVENRDVDSSYYEEIRNTPRPGHADYPAGIKYFGYNDYRGGGHFSGRLTVGVVIAGYFAKKLLEREGIKVRAYLKRIGRVEAHVSPEELLSSENPYCPDEGAFEAMVEEMERARKAGDSVGGIVEAVAFNVPPGLGGPWEEDIEADIASALFRIPAVKGVEFGLGFGLAELRGSQANDPFVLKDGKVVTETNNHGGVLGGMTTGMPLVVRAAFKPTPSIYLPQRTVDLGRMEEVTLKLRGRFDSCIVPKALPVVESSVAFVIADHLLRRRAWEGMVR.

Arg-44 and Arg-49 together coordinate NADP(+). Residues 121–123 (HFS), Gly-277, 292–296 (KPTPS), and Arg-319 each bind FMN.

Belongs to the chorismate synthase family. FMNH2 serves as cofactor.

It catalyses the reaction 5-O-(1-carboxyvinyl)-3-phosphoshikimate = chorismate + phosphate. Its pathway is metabolic intermediate biosynthesis; chorismate biosynthesis; chorismate from D-erythrose 4-phosphate and phosphoenolpyruvate: step 7/7. Its function is as follows. Catalyzes the anti-1,4-elimination of the C-3 phosphate and the C-6 proR hydrogen from 5-enolpyruvylshikimate-3-phosphate (EPSP) to yield chorismate, which is the branch point compound that serves as the starting substrate for the three terminal pathways of aromatic amino acid biosynthesis. This reaction introduces a second double bond into the aromatic ring system. This Thermococcus kodakarensis (strain ATCC BAA-918 / JCM 12380 / KOD1) (Pyrococcus kodakaraensis (strain KOD1)) protein is Chorismate synthase.